The chain runs to 145 residues: Deoxyuridine 5'-triphosphate nucleotidohydrolase (145 aa).

Residues 62 to 64 (RSG), Asn75, 79 to 81 (TVD), and Lys89 each bind substrate.

The protein belongs to the dUTPase family. Requires Mg(2+) as cofactor.

It carries out the reaction dUTP + H2O = dUMP + diphosphate + H(+). It functions in the pathway pyrimidine metabolism; dUMP biosynthesis; dUMP from dCTP (dUTP route): step 2/2. Functionally, this enzyme is involved in nucleotide metabolism: it produces dUMP, the immediate precursor of thymidine nucleotides and it decreases the intracellular concentration of dUTP so that uracil cannot be incorporated into DNA. The sequence is that of Deoxyuridine 5'-triphosphate nucleotidohydrolase from Helicobacter pylori (strain J99 / ATCC 700824) (Campylobacter pylori J99).